The chain runs to 379 residues: Dual-specificity RNA methyltransferase RlmN (379 aa).

E95 (proton acceptor) is an active-site residue. In terms of domain architecture, Radical SAM core spans 101-345; it reads EETRGTLCVS…TTVRKTRGDD (245 aa). A disulfide bridge links C108 with C350. 3 residues coordinate [4Fe-4S] cluster: C115, C119, and C122. S-adenosyl-L-methionine contacts are provided by residues 176–177, S208, 230–232, and N307; these read GE and SLH. The active-site S-methylcysteine intermediate is C350.

The protein belongs to the radical SAM superfamily. RlmN family. Requires [4Fe-4S] cluster as cofactor.

It localises to the cytoplasm. It carries out the reaction adenosine(2503) in 23S rRNA + 2 reduced [2Fe-2S]-[ferredoxin] + 2 S-adenosyl-L-methionine = 2-methyladenosine(2503) in 23S rRNA + 5'-deoxyadenosine + L-methionine + 2 oxidized [2Fe-2S]-[ferredoxin] + S-adenosyl-L-homocysteine. The enzyme catalyses adenosine(37) in tRNA + 2 reduced [2Fe-2S]-[ferredoxin] + 2 S-adenosyl-L-methionine = 2-methyladenosine(37) in tRNA + 5'-deoxyadenosine + L-methionine + 2 oxidized [2Fe-2S]-[ferredoxin] + S-adenosyl-L-homocysteine. Functionally, specifically methylates position 2 of adenine 2503 in 23S rRNA and position 2 of adenine 37 in tRNAs. m2A2503 modification seems to play a crucial role in the proofreading step occurring at the peptidyl transferase center and thus would serve to optimize ribosomal fidelity. The protein is Dual-specificity RNA methyltransferase RlmN of Burkholderia lata (strain ATCC 17760 / DSM 23089 / LMG 22485 / NCIMB 9086 / R18194 / 383).